We begin with the raw amino-acid sequence, 264 residues long: Thiazole synthase (264 aa).

Residue Lys106 is the Schiff-base intermediate with DXP of the active site. 1-deoxy-D-xylulose 5-phosphate-binding positions include Gly167, 193–194, and 215–216; these read AG and NS.

This sequence belongs to the ThiG family. Homotetramer. Forms heterodimers with either ThiH or ThiS.

The protein localises to the cytoplasm. The catalysed reaction is [ThiS sulfur-carrier protein]-C-terminal-Gly-aminoethanethioate + 2-iminoacetate + 1-deoxy-D-xylulose 5-phosphate = [ThiS sulfur-carrier protein]-C-terminal Gly-Gly + 2-[(2R,5Z)-2-carboxy-4-methylthiazol-5(2H)-ylidene]ethyl phosphate + 2 H2O + H(+). Its pathway is cofactor biosynthesis; thiamine diphosphate biosynthesis. Catalyzes the rearrangement of 1-deoxy-D-xylulose 5-phosphate (DXP) to produce the thiazole phosphate moiety of thiamine. Sulfur is provided by the thiocarboxylate moiety of the carrier protein ThiS. In vitro, sulfur can be provided by H(2)S. This chain is Thiazole synthase, found in Prochlorococcus marinus (strain MIT 9215).